The primary structure comprises 919 residues: Glutamate receptor ionotropic, kainate 3 (919 aa).

Positions Met-1 to Gly-31 are cleaved as a signal peptide. The Extracellular portion of the chain corresponds to Met-32–Pro-563. N-linked (GlcNAc...) asparagine glycans are attached at residues Asn-70, Asn-76, Asn-278, Asn-381, Asn-415, Asn-426, and Asn-433. Cys-99 and Cys-350 are oxidised to a cystine. Residues Pro-518, Thr-520, and Arg-525 each coordinate L-glutamate. N-linked (GlcNAc...) asparagine glycans are attached at residues Asn-548 and Asn-551. A helical transmembrane segment spans residues Asp-564 to Ala-584. The Cytoplasmic portion of the chain corresponds to Arg-585–Arg-636. The chain crosses the membrane as a helical span at residues Ile-637–Leu-657. The Extracellular portion of the chain corresponds to Ala-658–Lys-820. Ala-691, Thr-692, and Glu-739 together coordinate L-glutamate. An N-linked (GlcNAc...) asparagine glycan is attached at Asn-752. The helical transmembrane segment at Ile-821–Gly-841 threads the bilayer. Over Glu-842 to Pro-919 the chain is Cytoplasmic. Ser-869 is subject to Phosphoserine. Lys-887 is covalently cross-linked (Glycyl lysine isopeptide (Lys-Gly) (interchain with G-Cter in SUMO1)).

The protein belongs to the glutamate-gated ion channel (TC 1.A.10.1) family. GRIK3 subfamily. As to quaternary structure, homotetramer, and heterotetramer with either GRIK4 or GRIK5. Can form functional heteromeric receptors with GRIK2. Interacts with PRKCABP. Interacts with NETO2.

It is found in the cell membrane. Its subcellular location is the postsynaptic cell membrane. It carries out the reaction Ca(2+)(in) = Ca(2+)(out). Its function is as follows. Ionotropic glutamate receptor that functions as a cation-permeable ligand-gated ion channel, gated by L-glutamate and the glutamatergic agonist kainic acid. Binding of the excitatory neurotransmitter L-glutamate induces a conformation change, leading to the opening of the cation channel, and thereby converts the chemical signal to an electrical impulse. The receptor then desensitizes rapidly and enters a transient inactive state, characterized by the presence of bound agonist. In association with GRIK2, involved in presynaptic facilitation of glutamate release at hippocampal mossy fiber synapses. This Homo sapiens (Human) protein is Glutamate receptor ionotropic, kainate 3 (GRIK3).